The primary structure comprises 444 residues: Zinc finger protein ZIC 1 (444 aa).

The C2H2-type 1 zinc-finger motif lies at 222–257 (LICKWIEPEQLANPKKSCNKTFSTMHELVTHVTVEH). Residues 271–293 (EECPREGKPFKAKYKLVNHIRVH) form a C2H2-type 2; degenerate zinc finger. C2H2-type zinc fingers lie at residues 299–323 (FPCP…KRTH), 329–353 (FKCE…MHVH), and 359–381 (YLCK…MKVH). The interval 372 to 432 (SSLRKHMKVH…SSAGHHTASH (61 aa)) is disordered. The segment covering 383–432 (SSSQGSQPSPAASSGYESSTPPTIVSPSTENQTASSLSPSSSAGHHTASH) has biased composition (low complexity).

It belongs to the GLI C2H2-type zinc-finger protein family.

It is found in the nucleus. The protein resides in the cytoplasm. Its function is as follows. Acts as a transcriptional activator. Involved in neurogenesis. Plays important roles in the early stage of organogenesis of the CNS, as well as during dorsal spinal cord development and maturation of the cerebellum. Binds to the minimal GLI-consensus sequence 5'-TGGGTGGTC-3'. In Gallus gallus (Chicken), this protein is Zinc finger protein ZIC 1 (ZIC1).